A 142-amino-acid chain; its full sequence is Large ribosomal subunit protein uL11 (142 aa).

Belongs to the universal ribosomal protein uL11 family. As to quaternary structure, part of the ribosomal stalk of the 50S ribosomal subunit. Interacts with L10 and the large rRNA to form the base of the stalk. L10 forms an elongated spine to which L12 dimers bind in a sequential fashion forming a multimeric L10(L12)X complex. Post-translationally, one or more lysine residues are methylated.

Forms part of the ribosomal stalk which helps the ribosome interact with GTP-bound translation factors. This is Large ribosomal subunit protein uL11 from Shewanella frigidimarina (strain NCIMB 400).